We begin with the raw amino-acid sequence, 363 residues long: MSKNYHIAVLPGDGIGPEVMAQALKVMDAVRSRFDMRITTSRYDVGGIAIDNHGHPLPKATVEGCEQADAILFGSVGGPKWENLPPESQPERGALLPLRKHFKLFSNLRPAKLYQGLEAFCPLRADIAANGFDILCVRELTGGIYFGQPKGREGSGQYEKAFDTEVYHRFEIERIARIAFESARKRRRKVTSIDKANVLQSSILWREIVNDVAKTYPDVELAHMYIDNATMQLIKDPSQFDVLLCSNLFGDILSDECAMITGSMGMLPSASLNEQGFGLYEPAGGSAPDIAGKNIANPIAQILSLALLLRYSLDANDAATAIEQAINRALEEGVRTGDLARGAAAVSTDEMGDIIARYVAEGV.

G78–E91 lines the NAD(+) pocket. Substrate-binding residues include R99, R109, R138, and D227. Mg(2+)-binding residues include D227, D251, and D255. NAD(+) is bound at residue G285–N297.

It belongs to the isocitrate and isopropylmalate dehydrogenases family. LeuB type 1 subfamily. In terms of assembly, homodimer. Mg(2+) serves as cofactor. Requires Mn(2+) as cofactor.

Its subcellular location is the cytoplasm. It carries out the reaction (2R,3S)-3-isopropylmalate + NAD(+) = 4-methyl-2-oxopentanoate + CO2 + NADH. Its pathway is amino-acid biosynthesis; L-leucine biosynthesis; L-leucine from 3-methyl-2-oxobutanoate: step 3/4. Catalyzes the oxidation of 3-carboxy-2-hydroxy-4-methylpentanoate (3-isopropylmalate) to 3-carboxy-4-methyl-2-oxopentanoate. The product decarboxylates to 4-methyl-2 oxopentanoate. The chain is 3-isopropylmalate dehydrogenase from Salmonella paratyphi A (strain ATCC 9150 / SARB42).